Reading from the N-terminus, the 454-residue chain is tRNA modification GTPase MnmE (454 aa).

Arginine 23, glutamate 80, and lysine 120 together coordinate (6S)-5-formyl-5,6,7,8-tetrahydrofolate. The TrmE-type G domain maps to 216-377 (GMKVVIAGRP…LRNNLKQSMG (162 aa)). K(+) is bound at residue asparagine 226. GTP contacts are provided by residues 226–231 (NAGKSS), 245–251 (TDIAGTT), 270–273 (DTAG), 335–338 (NKAD), and 358–360 (SAR). A Mg(2+)-binding site is contributed by serine 230. Positions 245, 247, and 250 each coordinate K(+). Mg(2+) is bound at residue threonine 251. Lysine 454 lines the (6S)-5-formyl-5,6,7,8-tetrahydrofolate pocket.

Belongs to the TRAFAC class TrmE-Era-EngA-EngB-Septin-like GTPase superfamily. TrmE GTPase family. In terms of assembly, homodimer. Heterotetramer of two MnmE and two MnmG subunits. The cofactor is K(+).

The protein localises to the cytoplasm. Exhibits a very high intrinsic GTPase hydrolysis rate. Involved in the addition of a carboxymethylaminomethyl (cmnm) group at the wobble position (U34) of certain tRNAs, forming tRNA-cmnm(5)s(2)U34. The chain is tRNA modification GTPase MnmE from Salmonella paratyphi A (strain AKU_12601).